The primary structure comprises 60 residues: Large ribosomal subunit protein uL30 (60 aa).

This sequence belongs to the universal ribosomal protein uL30 family. As to quaternary structure, part of the 50S ribosomal subunit.

The polypeptide is Large ribosomal subunit protein uL30 (Streptococcus pyogenes serotype M1).